We begin with the raw amino-acid sequence, 481 residues long: G-protein coupled receptor 37-like 1 (481 aa).

An N-terminal signal peptide occupies residues 1 to 24 (MRWLWPLAVSLAVVLAVGPSEVSG). Residues 25 to 134 (AATLSLGGHR…ESSYSAYAVM (110 aa)) lie on the Extracellular side of the membrane. 2 disordered regions span residues 30-55 (LGGH…GPKE) and 76-107 (LQPT…TNLT). A compositionally biased stretch (polar residues) spans 95-107 (TSESGQELRTNLT). N105 carries an N-linked (GlcNAc...) asparagine glycan. A helical transmembrane segment spans residues 135 to 155 (LLALVVFAVGIVGNLSVMCIV). At 156–167 (WHSYYLKSAWNS) the chain is on the cytoplasmic side. The chain crosses the membrane as a helical span at residues 168–188 (ILASLALWDFLVLFFCLPIVI). The Extracellular segment spans residues 189-205 (FNEITKQRLLGDVSCRA). A disulfide bridge links C203 with C286. The chain crosses the membrane as a helical span at residues 206–226 (VPFMEVSSLGVTTFSLCALGI). The Cytoplasmic segment spans residues 227–251 (DRFHVATSTLPKVRPIERCQSILAK). Residues 252–272 (LAVIWVGSMMLAVPELLLWQL) traverse the membrane as a helical segment. Residues 273–310 (AQEPTPTMGTVDSCIMKPSADLPESLYSLVMTYQNARM) lie on the Extracellular side of the membrane. Residues 311–331 (WWYFGCYFCLPILFTVTCQLV) traverse the membrane as a helical segment. The Cytoplasmic portion of the chain corresponds to 332–360 (TWRVRGPPGRKPECRAGRHEQCESQLNST). Residues 361-381 (VVGLTVVYAFCTLPENICNIV) form a helical membrane-spanning segment. Residues 382-398 (VAYLSTELTRQTLDLLG) are Extracellular-facing. Residues 399-419 (LINQFSTFFKGAITPVLLLCI) form a helical membrane-spanning segment. The Cytoplasmic portion of the chain corresponds to 420 to 481 (CRPLGQAFLD…PPLLPLGTPC (62 aa)). S471 is subject to Phosphoserine. The residue at position 479 (T479) is a Phosphothreonine.

Belongs to the G-protein coupled receptor 1 family. Interacts with the PTCH1 receptor. In terms of processing, undergoes metalloprotease-mediated cleavage which reduces its constitutive activity. Ubiquitinated. Highly expressed in brain.

It localises to the cell membrane. It is found in the cell projection. The protein localises to the cilium membrane. In terms of biological role, G-protein coupled receptor. Has been shown to bind the neuroprotective and glioprotective factor prosaposin (PSAP), leading to endocytosis followed by an ERK phosphorylation cascade. However, other studies have shown that prosaposin does not increase activity. It has been suggested that GPR37L1 is a constitutively active receptor which signals through the guanine nucleotide-binding protein G(s) subunit alpha. Participates in the regulation of postnatal cerebellar development by modulating the Shh pathway. Regulates baseline blood pressure in females and protects against cardiovascular stress in males. Mediates inhibition of astrocyte glutamate transporters and reduction in neuronal N-methyl-D-aspartate receptor activity. The chain is G-protein coupled receptor 37-like 1 (Gpr37l1) from Rattus norvegicus (Rat).